Consider the following 297-residue polypeptide: 4-hydroxy-tetrahydrodipicolinate synthase (297 aa).

A pyruvate-binding site is contributed by Thr-47. Residue Tyr-135 is the Proton donor/acceptor of the active site. The active-site Schiff-base intermediate with substrate is Lys-163. Ile-205 provides a ligand contact to pyruvate.

This sequence belongs to the DapA family. As to quaternary structure, homotetramer; dimer of dimers.

It localises to the cytoplasm. It carries out the reaction L-aspartate 4-semialdehyde + pyruvate = (2S,4S)-4-hydroxy-2,3,4,5-tetrahydrodipicolinate + H2O + H(+). The protein operates within amino-acid biosynthesis; L-lysine biosynthesis via DAP pathway; (S)-tetrahydrodipicolinate from L-aspartate: step 3/4. Catalyzes the condensation of (S)-aspartate-beta-semialdehyde [(S)-ASA] and pyruvate to 4-hydroxy-tetrahydrodipicolinate (HTPA). This chain is 4-hydroxy-tetrahydrodipicolinate synthase, found in Dehalococcoides mccartyi (strain CBDB1).